The following is a 374-amino-acid chain: Phosphate-binding protein PstS1 (374 aa).

An N-terminal signal peptide occupies residues 1 to 23 (MKIRLHTLLAVLTAAPLLLAAAG). The N-palmitoyl cysteine moiety is linked to residue C24. A lipid anchor (S-diacylglycerol cysteine) is attached at C24. The disordered stretch occupies residues 25 to 48 (GSKPPSGSPETGAGAGTVATTPAS). Phosphate-binding positions include 58 to 60 (STL), S88, D106, and 189 to 191 (SGD).

This sequence belongs to the PstS family. In terms of assembly, the complex is composed of two ATP-binding proteins (PstB), two transmembrane proteins (PstC and PstA) and a solute-binding protein (PstS).

The protein resides in the cell membrane. The protein localises to the secreted. Functionally, functions in inorganic phosphate uptake, a phosphate-binding protein, although probably not the main uptake protein under phosphate starvation. Part of the ABC transporter complex PstSACB involved in phosphate import. A host TLR2 agonist (toll-like receptor), requires both host TLR1 and TLR2 as coreceptors. The sequence is that of Phosphate-binding protein PstS1 (pstS1) from Mycobacterium bovis (strain BCG / Pasteur 1173P2).